The primary structure comprises 167 residues: Small ribosomal subunit protein uS5 (167 aa).

An S5 DRBM domain is found at 12 to 75 (LQEKLVAVNR…EKARRNIVSV (64 aa)).

It belongs to the universal ribosomal protein uS5 family. In terms of assembly, part of the 30S ribosomal subunit. Contacts proteins S4 and S8.

Its function is as follows. With S4 and S12 plays an important role in translational accuracy. Functionally, located at the back of the 30S subunit body where it stabilizes the conformation of the head with respect to the body. The polypeptide is Small ribosomal subunit protein uS5 (Shewanella loihica (strain ATCC BAA-1088 / PV-4)).